We begin with the raw amino-acid sequence, 200 residues long: Small ribosomal subunit protein uS4 (200 aa).

A disordered region spans residues 22 to 43; it reads TGKELQKRPYPPGQHGPSQRRK. The region spanning 92–152 is the S4 RNA-binding domain; it reads SRLDNLVYRL…EKSRNLQVIK (61 aa).

It belongs to the universal ribosomal protein uS4 family. In terms of assembly, part of the 30S ribosomal subunit. Contacts protein S5. The interaction surface between S4 and S5 is involved in control of translational fidelity.

One of the primary rRNA binding proteins, it binds directly to 16S rRNA where it nucleates assembly of the body of the 30S subunit. Functionally, with S5 and S12 plays an important role in translational accuracy. The sequence is that of Small ribosomal subunit protein uS4 from Geobacillus sp. (strain WCH70).